We begin with the raw amino-acid sequence, 57 residues long: Small ribosomal subunit protein eS27 (57 aa).

The Zn(2+) site is built by Cys10, Cys13, Cys29, and Cys32. Residues 10–32 form a C4-type zinc finger; it reads CGDCENEQVVFGKASSVVSCAVC.

This sequence belongs to the eukaryotic ribosomal protein eS27 family. As to quaternary structure, part of the 30S ribosomal subunit. Zn(2+) serves as cofactor.

This Halorubrum lacusprofundi (strain ATCC 49239 / DSM 5036 / JCM 8891 / ACAM 34) protein is Small ribosomal subunit protein eS27.